The chain runs to 293 residues: MPELPEVETVRRGLQPVMEGAKIVVAEARRPDLRFPFQPDFVARLQGQVVTGLGRRAKYLMADLASGDVLLMHLGMSGSFRVIKPDNDAAPGEFHYPRGKDTTHDHVLFRMSSGADIVFNDPRRFGYMKVIARNALEDEPLLRGLGPEPLGNEFDAAMLARSCEGKATSLKAALLDQRVVAGLGNIYVCEALHRSHLSPRRIAATLATRKGEPTDHAKRLVGAIHTVLNDAIKAGGSSLRDHRQTTGELGYFQHSFKVYDREGETCKTPACGGTIKRFTQNGRSTFWCPKCQK.

Pro-2 (schiff-base intermediate with DNA) is an active-site residue. Glu-3 functions as the Proton donor in the catalytic mechanism. The active-site Proton donor; for beta-elimination activity is Lys-58. Residues His-104, Arg-123, and Lys-166 each coordinate DNA. The segment at 257-293 (KVYDREGETCKTPACGGTIKRFTQNGRSTFWCPKCQK) adopts an FPG-type zinc-finger fold. Arg-283 (proton donor; for delta-elimination activity) is an active-site residue.

It belongs to the FPG family. As to quaternary structure, monomer. The cofactor is Zn(2+).

It carries out the reaction Hydrolysis of DNA containing ring-opened 7-methylguanine residues, releasing 2,6-diamino-4-hydroxy-5-(N-methyl)formamidopyrimidine.. It catalyses the reaction 2'-deoxyribonucleotide-(2'-deoxyribose 5'-phosphate)-2'-deoxyribonucleotide-DNA = a 3'-end 2'-deoxyribonucleotide-(2,3-dehydro-2,3-deoxyribose 5'-phosphate)-DNA + a 5'-end 5'-phospho-2'-deoxyribonucleoside-DNA + H(+). Involved in base excision repair of DNA damaged by oxidation or by mutagenic agents. Acts as a DNA glycosylase that recognizes and removes damaged bases. Has a preference for oxidized purines, such as 7,8-dihydro-8-oxoguanine (8-oxoG). Has AP (apurinic/apyrimidinic) lyase activity and introduces nicks in the DNA strand. Cleaves the DNA backbone by beta-delta elimination to generate a single-strand break at the site of the removed base with both 3'- and 5'-phosphates. The protein is Formamidopyrimidine-DNA glycosylase of Bradyrhizobium diazoefficiens (strain JCM 10833 / BCRC 13528 / IAM 13628 / NBRC 14792 / USDA 110).